The sequence spans 115 residues: Photosystem II reaction center Psb28 protein (115 aa).

This sequence belongs to the Psb28 family. In terms of assembly, part of the photosystem II complex.

The protein localises to the plastid. The protein resides in the chloroplast thylakoid membrane. This chain is Photosystem II reaction center Psb28 protein, found in Trieres chinensis (Marine centric diatom).